Consider the following 93-residue polypeptide: Acylphosphatase (93 aa).

The Acylphosphatase-like domain maps to 5–93; it reads AKQIVVRGRV…PNFRGFQVTG (89 aa). Active-site residues include Arg-20 and Asn-38.

It belongs to the acylphosphatase family.

The catalysed reaction is an acyl phosphate + H2O = a carboxylate + phosphate + H(+). This chain is Acylphosphatase (acyP), found in Lacticaseibacillus paracasei (strain ATCC 334 / BCRC 17002 / CCUG 31169 / CIP 107868 / KCTC 3260 / NRRL B-441) (Lactobacillus paracasei).